The chain runs to 262 residues: 3-methyl-2-oxobutanoate hydroxymethyltransferase (262 aa).

Positions 43 and 82 each coordinate Mg(2+). 3-methyl-2-oxobutanoate-binding positions include 43-44, Asp82, and Lys110; that span reads DS. Glu112 lines the Mg(2+) pocket. Glu179 acts as the Proton acceptor in catalysis.

It belongs to the PanB family. Homodecamer; pentamer of dimers. Mg(2+) serves as cofactor.

Its subcellular location is the cytoplasm. It carries out the reaction 3-methyl-2-oxobutanoate + (6R)-5,10-methylene-5,6,7,8-tetrahydrofolate + H2O = 2-dehydropantoate + (6S)-5,6,7,8-tetrahydrofolate. It participates in cofactor biosynthesis; (R)-pantothenate biosynthesis; (R)-pantoate from 3-methyl-2-oxobutanoate: step 1/2. Catalyzes the reversible reaction in which hydroxymethyl group from 5,10-methylenetetrahydrofolate is transferred onto alpha-ketoisovalerate to form ketopantoate. The sequence is that of 3-methyl-2-oxobutanoate hydroxymethyltransferase from Sodalis glossinidius (strain morsitans).